Reading from the N-terminus, the 275-residue chain is MTTTNLSALADPLRLYDEVFGSRLLLGTARYPSPQSLEDAVRACGPAMLTVALRRQSAGTPEGGAGFWKMLRALGVPVLPNTAGCYSADEAYTLAQMSREVFETDWIKLEVIGDDYTLQPDTLALPAAAERLIRDGFKVLPYCTEDLVLCRRLLDVGCRALMPWAAPIGTGRGPTNPYGLRLLRERLPDVPLIVDAGLGVPSHATQVMEWGYDGVLLNTAVAQAGDPVAMARAFAMATQAGRLARLSGPMPERDVAQASTPVVGLPFWHADKNSA.

Lys108 (schiff-base intermediate with DXP) is an active-site residue. Residues Gly169, 196–197 (AG), and 218–219 (NT) contribute to the 1-deoxy-D-xylulose 5-phosphate site.

The protein belongs to the ThiG family. As to quaternary structure, homotetramer. Forms heterodimers with either ThiH or ThiS.

It is found in the cytoplasm. The catalysed reaction is [ThiS sulfur-carrier protein]-C-terminal-Gly-aminoethanethioate + 2-iminoacetate + 1-deoxy-D-xylulose 5-phosphate = [ThiS sulfur-carrier protein]-C-terminal Gly-Gly + 2-[(2R,5Z)-2-carboxy-4-methylthiazol-5(2H)-ylidene]ethyl phosphate + 2 H2O + H(+). It participates in cofactor biosynthesis; thiamine diphosphate biosynthesis. In terms of biological role, catalyzes the rearrangement of 1-deoxy-D-xylulose 5-phosphate (DXP) to produce the thiazole phosphate moiety of thiamine. Sulfur is provided by the thiocarboxylate moiety of the carrier protein ThiS. In vitro, sulfur can be provided by H(2)S. This is Thiazole synthase from Ralstonia nicotianae (strain ATCC BAA-1114 / GMI1000) (Ralstonia solanacearum).